We begin with the raw amino-acid sequence, 69 residues long: Toxin Tma3 (69 aa).

The 65-residue stretch at 2–66 (KDDYPVDTAK…SPTKKSGRCN (65 aa)) folds into the LCN-type CS-alpha/beta domain. Cystine bridges form between C14–C65, C18–C41, C27–C48, and C31–C50.

This sequence belongs to the long (4 C-C) scorpion toxin superfamily. Sodium channel inhibitor family. As to expression, expressed by the venom gland.

The protein localises to the secreted. Functionally, inhibits voltage-gated sodium channels (Nav). This toxin shows insect lethality against crickets. The protein is Toxin Tma3 of Tityus macrochirus (Scorpion).